We begin with the raw amino-acid sequence, 169 residues long: MYTSGYAHRSSSFSSAASKIARVSTENTTAGLISEVVYREDQPMMTQLLLLPLLQQLGQQSRWQLWLTPQQKLSREWVQASGLPLTKVMQISQLSPCHTVESMVRALRTGNYSVVIGWLADDLTAEEHAELVDAANEGNAMGFIMRPVSASSHATRQLSGLKIHSNLYH.

Residues 106-112 form a ftsZ binding region; it reads ALRTGNY. Residues 162–169 form a lon protease binding region; that stretch reads KIHSNLYH.

Belongs to the SulA family. Interacts with FtsZ. Post-translationally, is rapidly cleaved and degraded by the Lon protease once DNA damage is repaired.

In terms of biological role, component of the SOS system and an inhibitor of cell division. Accumulation of SulA causes rapid cessation of cell division and the appearance of long, non-septate filaments. In the presence of GTP, binds a polymerization-competent form of FtsZ in a 1:1 ratio, thus inhibiting FtsZ polymerization and therefore preventing it from participating in the assembly of the Z ring. This mechanism prevents the premature segregation of damaged DNA to daughter cells during cell division. This chain is Cell division inhibitor SulA, found in Escherichia coli O81 (strain ED1a).